The sequence spans 122 residues: Large ribosomal subunit protein uL14 (122 aa).

This sequence belongs to the universal ribosomal protein uL14 family. In terms of assembly, part of the 50S ribosomal subunit. Forms a cluster with proteins L3 and L19. In the 70S ribosome, L14 and L19 interact and together make contacts with the 16S rRNA in bridges B5 and B8.

Its function is as follows. Binds to 23S rRNA. Forms part of two intersubunit bridges in the 70S ribosome. This is Large ribosomal subunit protein uL14 from Streptococcus agalactiae serotype Ia (strain ATCC 27591 / A909 / CDC SS700).